The following is a 939-amino-acid chain: Progesterone receptor (939 aa).

Residues 1-11 (MTERTGKDARA) are compositionally biased toward basic and acidic residues. The AF3; mediates transcriptional activation (in isoform B) stretch occupies residues 1–174 (MTERTGKDAR…RSSQGAACPL (174 aa)). The segment at 1–302 (MTERTGKDAR…AEQDAPAPGC (302 aa)) is disordered. The interval 1–572 (MTERTGKDAR…YSFESLPQKI (572 aa)) is modulating, Ala/Pro-rich. Residue K7 forms a Glycyl lysine isopeptide (Lys-Gly) (interchain with G-Cter in SUMO) linkage. A compositionally biased stretch (low complexity) spans 15 to 26 (AGGAPSPAPAAE). S20 is subject to Phosphoserine. The segment covering 27-36 (PESRRRDGGR) has biased composition (basic and acidic residues). Positions 49-67 (AAAAAAAAAAASAAPSAPS) are enriched in low complexity. A Phosphoserine modification is found at S141. The mediates transcriptional transrepression (in isoform A) stretch occupies residues 175–314 (MSRPEGKAGD…LATTMMDFIH (140 aa)). The short motif at 193 to 197 (KGPPR) is the Nuclear localization signal element. S200 is subject to Phosphoserine. Composition is skewed to low complexity over residues 211–230 (GAHA…AALG) and 257–278 (PAAA…TAPV). S303 is modified (phosphoserine; by MAPK1). The residue at position 349 (S349) is a Phosphoserine; by MAPK. A Glycyl lysine isopeptide (Lys-Gly) (interchain with G-Cter in SUMO); alternate cross-link involves residue K392. Residue K392 forms a Glycyl lysine isopeptide (Lys-Gly) (interchain with G-Cter in ubiquitin); alternate linkage. The residue at position 404 (S404) is a Phosphoserine; by CDK2. Positions 463-552 (PALECVLYKA…VYQPYLNYLR (90 aa)) are AF1; mediates transcriptional activation. K537 is covalently cross-linked (Glycyl lysine isopeptide (Lys-Gly) (interchain with G-Cter in SUMO)). 2 NR C4-type zinc fingers span residues 573–593 (CLIC…CGSC) and 609–633 (CAGR…LRKC). Residues 573-645 (CLICGDEASG…AGMVLGGRKF (73 aa)) constitute a DNA-binding region (nuclear receptor). S682 bears the Phosphoserine mark. The NR LBD domain occupies 685–919 (QDIQLIPPLI…EFPEMMSEVI (235 aa)). The AF2; mediates transcriptional activation stretch occupies residues 693 to 939 (LINLLMSIEP…MVKPLLFHKK (247 aa)).

It belongs to the nuclear hormone receptor family. NR3 subfamily. Interacts with SMARD1 and UNC45A. Interacts with CUEDC2; the interaction promotes ubiquitination, decreases sumoylation, and represses transcriptional activity. Interacts with PIAS3; the interaction promotes sumoylation of PR in a hormone-dependent manner, inhibits DNA-binding, and alters nuclear export. Interacts with SP1; the interaction requires ligand-induced phosphorylation on Ser-349 by ERK1/2-MAPK. Interacts with PRMT2. Isoform A interacts with NCOR2. Isoform B (but not isoform A) interacts with NCOA2 and NCOA1. Isoform B (but not isoform A) interacts with KLF9. Interacts with GTF2B. Phosphorylated on multiple serine sites. Several of these sites are hormone-dependent. Phosphorylation on Ser-303 occurs preferentially on isoform B, is highly hormone-dependent and modulates ubiquitination and sumoylation on Lys-392. Phosphorylation on Ser-303 and Ser-349 also requires induction by hormone. Basal phosphorylation on Ser-200 and Ser-404 is increased in response to progesterone and can be phosphorylated in vitro by the CDK2-A1 complex. Increased levels of phosphorylation on Ser-404 also in the presence of EGF, heregulin, IGF, PMA and FBS. Phosphorylation at this site by CDK2 is ligand-independent, and increases nuclear translocation and transcriptional activity. Phosphorylation at Ser-303, but not at Ser-200, is impaired during the G(2)/M phase of the cell cycle. Phosphorylation on Ser-349 by ERK1/2 MAPK is required for interaction with SP1. Post-translationally, sumoylation is hormone-dependent and represses transcriptional activity. Sumoylation on all three sites is enhanced by PIAS3. Desumoylated by SENP1. Sumoylation on Lys-392, the main site of sumoylation, is repressed by ubiquitination on the same site, and modulated by phosphorylation at Ser-303. In terms of processing, ubiquitination is hormone-dependent and represses sumoylation on the same site. Promoted by MAPK-mediated phosphorylation on Ser-303. Palmitoylated by ZDHHC7 and ZDHHC21. Palmitoylation is required for plasma membrane targeting and for rapid intracellular signaling via ERK and AKT kinases and cAMP generation. As to expression, expressed in mammary gland and uterus.

The protein resides in the nucleus. The protein localises to the cytoplasm. The steroid hormones and their receptors are involved in the regulation of eukaryotic gene expression and affect cellular proliferation and differentiation in target tissues. Depending on the isoform, progesterone receptor functions as a transcriptional activator or repressor. Functionally, ligand-dependent transdominant repressor of steroid hormone receptor transcriptional activity including repression of its isoform B, MR and ER. Transrepressional activity may involve recruitment of corepressor NCOR2. In terms of biological role, transcriptional activator of several progesteron-dependent promoters in a variety of cell types. Involved in activation of SRC-dependent MAPK signaling on hormone stimulation. This is Progesterone receptor (PGR) from Canis lupus familiaris (Dog).